The following is a 444-amino-acid chain: ATP-dependent protease ATPase subunit HslU (444 aa).

ATP is bound by residues isoleucine 18, 60 to 65, aspartate 256, glutamate 322, and arginine 394; that span reads GVGKTE.

Belongs to the ClpX chaperone family. HslU subfamily. As to quaternary structure, a double ring-shaped homohexamer of HslV is capped on each side by a ring-shaped HslU homohexamer. The assembly of the HslU/HslV complex is dependent on binding of ATP.

It localises to the cytoplasm. Functionally, ATPase subunit of a proteasome-like degradation complex; this subunit has chaperone activity. The binding of ATP and its subsequent hydrolysis by HslU are essential for unfolding of protein substrates subsequently hydrolyzed by HslV. HslU recognizes the N-terminal part of its protein substrates and unfolds these before they are guided to HslV for hydrolysis. The protein is ATP-dependent protease ATPase subunit HslU of Buchnera aphidicola subsp. Cinara cedri (strain Cc).